The following is a 494-amino-acid chain: Vacuolar-processing enzyme (494 aa).

Residues 1–20 (MTRLASGVLITLLVALAGIA) form the signal peptide. A glycan (N-linked (GlcNAc...) asparagine) is linked at Asn151. His178 is a catalytic residue. Catalysis depends on Cys220, which acts as the Nucleophile. Cys253 and Cys267 are oxidised to a cystine. N-linked (GlcNAc...) asparagine glycosylation occurs at Asn336. 2 disulfide bridges follow: Cys430/Cys460 and Cys442/Cys477.

Belongs to the peptidase C13 family. High levels are seen in the flowers, a lower level expression is seen in the leaves, while very low levels are seen in the stems and roots.

In terms of biological role, asparagine-specific endopeptidase that may be involved in processing of proteins targeted to vacuoles that accumulate during ethylene-regulated processes such as flower opening and flavedo degreening. In Citrus sinensis (Sweet orange), this protein is Vacuolar-processing enzyme.